The following is a 209-amino-acid chain: Ribonuclease HII (209 aa).

The 192-residue stretch at 18–209 (GLVAGVDEVG…FKPVKALLER (192 aa)) folds into the RNase H type-2 domain. A divalent metal cation is bound by residues Asp-24, Glu-25, and Asp-116.

Belongs to the RNase HII family. It depends on Mn(2+) as a cofactor. Mg(2+) serves as cofactor.

The protein localises to the cytoplasm. The catalysed reaction is Endonucleolytic cleavage to 5'-phosphomonoester.. Endonuclease that specifically degrades the RNA of RNA-DNA hybrids. In Shewanella sp. (strain MR-7), this protein is Ribonuclease HII.